The primary structure comprises 252 residues: Probable endonuclease 4 (252 aa).

Zn(2+) is bound by residues His-56, His-96, Glu-129, Asp-162, His-165, His-191, Asp-204, His-206, and Glu-233.

The protein belongs to the AP endonuclease 2 family. Zn(2+) is required as a cofactor.

It catalyses the reaction Endonucleolytic cleavage to 5'-phosphooligonucleotide end-products.. In terms of biological role, endonuclease IV plays a role in DNA repair. It cleaves phosphodiester bonds at apurinic or apyrimidinic (AP) sites, generating a 3'-hydroxyl group and a 5'-terminal sugar phosphate. The polypeptide is Probable endonuclease 4 (Mycobacterium marinum (strain ATCC BAA-535 / M)).